The sequence spans 446 residues: SPARC-related modular calcium-binding protein 2 (446 aa).

Positions 1–21 (MLLPQLCWLPLLAGLLPPVPA) are cleaved as a signal peptide. In terms of domain architecture, Kazal-like spans 34–86 (QDKDKDCSLDCAGSPQKPLCASDGRTFLSRCEFQRAKCKDPQLEIAYRGNCKD). Disulfide bonds link C40-C71, C44-C64, C53-C84, C90-C113, C124-C131, and C133-C153. The 67-residue stretch at 87–153 (VSRCVAERKY…TAVAHKTPRC (67 aa)) folds into the Thyroglobulin type-1 1 domain. Residues 147–228 (AHKTPRCPGS…EHQSALEEAK (82 aa)) form a disordered region. Residues 161–172 (LPQREGTGKTDD) show a composition bias toward basic and acidic residues. The N-linked (GlcNAc...) asparagine glycan is linked to N206. Over residues 206–216 (NKTNKNSVSSC) the composition is skewed to polar residues. The Thyroglobulin type-1 2 domain maps to 213–281 (VSSCDQEHQS…TSTRYEQPKC (69 aa)). Cystine bridges form between C216-C240, C251-C258, and C260-C281. Residues 217–228 (DQEHQSALEEAK) show a composition bias toward basic and acidic residues. EF-hand domains follow at residues 347–382 (LEERVVHWYFKLLDKNSSGDIGKKEIKPFKRFLRKK) and 384–419 (KPKKCVKKFVEYCDVNNDKSISVQELMGCLGVAKED). D360, N362, S364, D366, E371, D397, N399, D401, S403, and E408 together coordinate Ca(2+). A glycan (N-linked (GlcNAc...) asparagine) is linked at N362. The segment at 416 to 446 (AKEDGKADTKKRHTPRGHAESTSNRQPRKQG) is disordered.

In terms of assembly, binds various proteins from the extracellular matrix.

The protein resides in the secreted. Its subcellular location is the extracellular space. The protein localises to the extracellular matrix. It localises to the basement membrane. Promotes matrix assembly and cell adhesiveness. Can stimulate endothelial cell proliferation, migration, as well as angiogenesis. The chain is SPARC-related modular calcium-binding protein 2 (SMOC2) from Homo sapiens (Human).